Here is a 65-residue protein sequence, read N- to C-terminus: Beta-toxin Am IT (65 aa).

Glu-1 is subject to Pyrrolidone carboxylic acid (Glu); partial. Residues 1–64 (EHGYLLDKYT…LWNYKTNKCK (64 aa)) enclose the LCN-type CS-alpha/beta domain. 4 disulfides stabilise this stretch: Cys-12–Cys-63, Cys-16–Cys-38, Cys-23–Cys-45, and Cys-27–Cys-47. Ser-65 carries the post-translational modification Serine amide.

Belongs to the long (4 C-C) scorpion toxin superfamily. Sodium channel inhibitor family. Expressed by the venom gland.

It localises to the secreted. Its function is as follows. Has a toxic effect on insects and mammals. On German cockroach larvae, it provokes contraction, paralysis and lethality. Intracerebroventricular injection into mice causes severe neurotoxic symptoms. It fully competes with the binding of the iodinated Css4 (AC P60266) on rat brain synaptosomes, with moderate affinity and in a concentration-dependent manner (EC(50)=25 nM). It may act on both site 3 and site 4 of voltage-gated sodium channels. The protein is Beta-toxin Am IT of Androctonus mauritanicus mauritanicus (Scorpion).